Here is a 278-residue protein sequence, read N- to C-terminus: Tryptophan synthase alpha chain (278 aa).

Residues Glu-50 and Asp-61 each act as proton acceptor in the active site.

It belongs to the TrpA family. In terms of assembly, tetramer of two alpha and two beta chains.

The enzyme catalyses (1S,2R)-1-C-(indol-3-yl)glycerol 3-phosphate + L-serine = D-glyceraldehyde 3-phosphate + L-tryptophan + H2O. Its pathway is amino-acid biosynthesis; L-tryptophan biosynthesis; L-tryptophan from chorismate: step 5/5. The alpha subunit is responsible for the aldol cleavage of indoleglycerol phosphate to indole and glyceraldehyde 3-phosphate. This Nitrobacter winogradskyi (strain ATCC 25391 / DSM 10237 / CIP 104748 / NCIMB 11846 / Nb-255) protein is Tryptophan synthase alpha chain.